The chain runs to 209 residues: Small ribosomal subunit protein uS3 (209 aa).

The KH type-2 domain maps to 17 to 86 (IDEYLEKELR…NPQIEVEEIK (70 aa)).

The protein belongs to the universal ribosomal protein uS3 family. In terms of assembly, part of the 30S ribosomal subunit.

Binds the lower part of the 30S subunit head. The chain is Small ribosomal subunit protein uS3 from Thermococcus gammatolerans (strain DSM 15229 / JCM 11827 / EJ3).